The following is a 156-amino-acid chain: Ribosomal RNA large subunit methyltransferase H (156 aa).

Residues L73, G104, and L123–F128 each bind S-adenosyl-L-methionine.

The protein belongs to the RNA methyltransferase RlmH family. In terms of assembly, homodimer.

Its subcellular location is the cytoplasm. It carries out the reaction pseudouridine(1915) in 23S rRNA + S-adenosyl-L-methionine = N(3)-methylpseudouridine(1915) in 23S rRNA + S-adenosyl-L-homocysteine + H(+). Functionally, specifically methylates the pseudouridine at position 1915 (m3Psi1915) in 23S rRNA. This is Ribosomal RNA large subunit methyltransferase H from Thioalkalivibrio sulfidiphilus (strain HL-EbGR7).